The sequence spans 267 residues: MSYFEAFVLALIQGLTEFLPISSSAHLILPSAILGWEDQGLAFDVAVHVGTLAAVVIYFRKEVITLFAALFASIFKGERSKEAKLAWMIVIATIPACIFGLVMKDVIEVYLRSAYVIATTTIIFGLLLWWVDKNASLLDDEYQAGWKKALFIGIAQALAMIPGTSRSGATITAALYLGFTREAAARFSFLMSIPIITLAGSYLGLKLVTSGEPVHVGFLLTGIVTSFISAYLCIHLFLKMISRMGMTPFVIYRLILGVGLFAYLLMA.

The next 8 helical transmembrane spans lie at 1–21, 39–59, 83–103, 111–131, 144–164, 189–209, 218–238, and 246–266; these read MSYFEAFVLALIQGLTEFLPI, QGLAFDVAVHVGTLAAVVIYF, AKLAWMIVIATIPACIFGLVM, LRSAYVIATTTIIFGLLLWWV, AGWKKALFIGIAQALAMIPGT, FLMSIPIITLAGSYLGLKLVT, FLLTGIVTSFISAYLCIHLFL, and MTPFVIYRLILGVGLFAYLLM.

It belongs to the UppP family.

The protein localises to the cell inner membrane. It carries out the reaction di-trans,octa-cis-undecaprenyl diphosphate + H2O = di-trans,octa-cis-undecaprenyl phosphate + phosphate + H(+). Its function is as follows. Catalyzes the dephosphorylation of undecaprenyl diphosphate (UPP). Confers resistance to bacitracin. This Vibrio vulnificus (strain CMCP6) protein is Undecaprenyl-diphosphatase.